Consider the following 930-residue polypeptide: A disintegrin and metalloproteinase with thrombospondin motifs 5 (930 aa).

The first 16 residues, 1–16 (MLLGWASLLLCAFRLP), serve as a signal peptide directing secretion. Residues 17–261 (LAAVGPAATP…PQTWWRRRRR (245 aa)) constitute a propeptide that is removed on maturation. 2 disordered regions span residues 24 to 69 (ATPA…QRRR) and 206 to 231 (RASCETPASTPEAHEHAPAHSNPSGR). The span at 31–42 (AGQPPTAAAAAQ) shows a compositional bias: low complexity. Basic and acidic residues predominate over residues 46-59 (RQGEEVQERAEPPG). Positions 207-214 (ASCETPAS) match the Cysteine switch motif. Position 209 (C209) interacts with Zn(2+). The Peptidase M12B domain occupies 267–476 (RQVELLLVAD…GHGNCLLDLP (210 aa)). 8 cysteine pairs are disulfide-bonded: C342–C394, C371–C376, C388–C471, C426–C455, C497–C519, C508–C529, C514–C548, and C542–C553. H410 serves as a coordination point for Zn(2+). E411 is a catalytic residue. H414 and H420 together coordinate Zn(2+). The region spanning 485 to 566 (ELPGQTYDAT…TKKKYYSTSS (82 aa)) is the Disintegrin domain. Residue N498 is glycosylated (N-linked (GlcNAc...) asparagine). In terms of domain architecture, TSP type-1 1 spans 567–622 (HGNWGSWGSWGQCSRSCGGGVQFAYRHCNNPAPRNNGRYCTGKRAIYRSCSLMPCP). C-linked (Man) tryptophan glycans are attached at residues W570 and W573. 3 disulfide bridges follow: C579–C616, C583–C621, and C594–C606. An O-linked (Fuc...) serine glycan is attached at S582. N728, N802, and N807 each carry an N-linked (GlcNAc...) asparagine glycan. The spacer stretch occupies residues 732-874 (TKIVGTFNKK…HGSNKVGSHT (143 aa)). A TSP type-1 2 domain is found at 875–929 (SQPQWVTGPWLACSRTCDTGWHTRTVQCQDGNRKLAKGCPLSQRPSAFKQCLLKK).

Requires Zn(2+) as cofactor. In terms of processing, the precursor is cleaved by furin and PCSK7 outside of the cell. Post-translationally, glycosylated. Can be O-fucosylated by POFUT2 on a serine or a threonine residue found within the consensus sequence C1-X(2)-(S/T)-C2-G of the TSP type-1 repeat domains where C1 and C2 are the first and second cysteine residue of the repeat, respectively. Fucosylated repeats can then be further glycosylated by the addition of a beta-1,3-glucose residue by the glucosyltransferase, B3GALTL. Fucosylation mediates the efficient secretion of ADAMTS family members. Can also be C-glycosylated with one or two mannose molecules on tryptophan residues within the consensus sequence W-X-X-W of the TPRs, and N-glycosylated. These other glycosylations can also facilitate secretion. As to expression, expressed at low level in placenta primarily but also detected in heart and brain, cervix, uterus, bladder, esophagus, rib cartilage, chondroblastoma, fibrous tissue and a joint capsule from an arthritic patient.

The protein resides in the secreted. The protein localises to the extracellular space. It localises to the extracellular matrix. Metalloproteinase that plays an important role in connective tissue organization, development, inflammation and cell migration. Extracellular matrix (ECM) degrading enzyme that show proteolytic activity toward the hyalectan group of chondroitin sulfate proteoglycans (CSPGs) including ACAN, VCAN, BCAN and NCAN. Cleavage within the hyalectans occurs at Glu-Xaa recognition motifs. Plays a role in embryonic development, including limb and cardiac morphogenesis, and skeletal muscle development through its VCAN remodeling properties. Cleaves VCAN in the pericellular matrix surrounding myoblasts, facilitating myoblast contact and fusion which is required for skeletal muscle development and regeneration. Participates in development of brown adipose tissue and browning of white adipose tissue. Plays an important role for T-lymphocyte migration from draining lymph nodes following viral infection. The polypeptide is A disintegrin and metalloproteinase with thrombospondin motifs 5 (ADAMTS5) (Homo sapiens (Human)).